Here is a 1417-residue protein sequence, read N- to C-terminus: MKDLVKFLKAQSKTSEDFDVIKIGLASPDMIRSWSFGEVKKPETINYRTFKPERDGLFCARIFGPVKDYECLCGKYKRLKHRGVICEKCGVEVTQTKVRRERMGHIELASPVAHIWFLKSLPSRIGLLLDMPLRDIERVLYFESYIVIEPGMTDLDKGQLLTEEQYIDAEDRWGDEFDAKMGAEAIQALLRDMDLPQECENLREELQETNSETKRKKITKRLKLLEAFIQSGNKPEWMVMTVLPVLPPDLRPLVPLDGGRFATSDLNDLYRRVINRNNRLKRLLDLIAPDIIVRNEKRMLQESVDALLDNGRRGRAITGSNRRPLKSLADMIKGKQGRFRQNLLGKRVDYSGRSVITVGPYLHLHQCGLPKKMALELFRPFIYAKLESRGFASTIKAAKKMVEREDAIVWDILADVIREHPILLNRAPTLHRLGIQAFEPLLIEGKAIQLHPLVCAAFNADFDGDQMAVHVPLTLEAQLEARALMMSTNNILSPANGEPIIVPSQDVVLGLYYMTRDKVNGKGEGMLLQDPREAEKAYRTGQVELHSRVKVRITEYVKNAVGEFEPQTNLVDTTIGRAILWMIAPKGMPFSLFNQTLGKKAISKLINESYRRLGMKPSVLFADQIMYTGFAYAARSGSSVGIDDMVIPAKKYEIISAAEDEVAEIQEQFQSGLVTAGERYNKVIDIWAAANERVAKAMMENLSTEEVINREGQPEKQASFNSIFMMADSGARGSAAQIRQLAGMRGLMARPDGSIIETPITANFREGLNVLQYFISTHGARKGLADTALKTANSGYLTRRLVDVAQDLVIIEDDCGTHEGIVMTPLIEGGDVKEALRDRVLGRVVAEDVLKPGTEEVLIARNTLLDEKLCDVIDSNSVDSIKVRSVVTCNTDFGVCAKCYGRDLARGHLINQGEAVGVIAAQSIGEPGTQLTMRTFHIGGAASAAAKESSIQVKNTGTLRLANVKFVTNNEGKLVLTSRNTELTIIDAFGRTKEHYKVPYGAILSKGDGQEVTAGETVANWDPHTMPVVSEVSGFVKFIDLIDGLTVTRQTDELTGLSSIVVQDVGERATAGKDLRPAIKLVDAKGNDILIPGTDVVAQYFLPGKAIVTLDDNAEVHIGEPLARIPQESVGTKDITGGLPRVADLFEARKPKEPAILAEISGIVSFGKETKGKRRLLITPAEGETYEEMIPKWRQLNVFEGEMVERGDLISDGAETPHDILRLRGVHAVTEYIVNEVQEVYRLQGVKINDKHIEVIVRQMLRKGIVTKAYDSEFLEGEQVEVARVKIVNRKREAEGKPLVEFERELLGITKASLATESFISAASFQETTRVLTEAAVAGKRDELRGLKENVIVGRLIPAGTGFAYHQNRQKKVVMSDEMPVKLSAADEEEIAAEFTVTAEDATASLAEMLNMADDAE.

Residues Cys-71, Cys-73, Cys-86, and Cys-89 each coordinate Zn(2+). Residues Asp-461, Asp-463, and Asp-465 each coordinate Mg(2+). Positions 815, 889, 896, and 899 each coordinate Zn(2+).

The protein belongs to the RNA polymerase beta' chain family. The RNAP catalytic core consists of 2 alpha, 1 beta, 1 beta' and 1 omega subunit. When a sigma factor is associated with the core the holoenzyme is formed, which can initiate transcription. Mg(2+) serves as cofactor. The cofactor is Zn(2+).

It catalyses the reaction RNA(n) + a ribonucleoside 5'-triphosphate = RNA(n+1) + diphosphate. Functionally, DNA-dependent RNA polymerase catalyzes the transcription of DNA into RNA using the four ribonucleoside triphosphates as substrates. This is DNA-directed RNA polymerase subunit beta' from Pasteurella multocida (strain Pm70).